We begin with the raw amino-acid sequence, 329 residues long: Ankyrin repeat and SOCS box protein 5 (329 aa).

6 ANK repeats span residues 69–98 (ADRS…NVNA), 102–131 (DHVT…NVNA), 135–164 (DGVT…KAQL), 167–196 (CLPS…DVDQ), 200–229 (HLGT…DVQK), and 232–261 (YWDT…DINA). One can recognise an SOCS box domain in the interval 278-329 (MVERILLQHEATPSSLYQLCRLCIRSYIGKPRLHLIPQLQLPTLLKNFLQYR).

It belongs to the ankyrin SOCS box (ASB) family.

Its pathway is protein modification; protein ubiquitination. May be a substrate-recognition component of a SCF-like ECS (Elongin-Cullin-SOCS-box protein) E3 ubiquitin-protein ligase complex which mediates the ubiquitination and subsequent proteasomal degradation of target proteins. May play a role in the initiation of arteriogenesis. The protein is Ankyrin repeat and SOCS box protein 5 (ASB5) of Homo sapiens (Human).